The primary structure comprises 419 residues: Tyrosine--tRNA ligase (419 aa).

An L-tyrosine-binding site is contributed by Tyr34. A 'HIGH' region motif is present at residues 39 to 48 (PTADSLHIGN). Residues Tyr169 and Gln173 each coordinate L-tyrosine. Residues 230-234 (KFGKT) carry the 'KMSKS' region motif. Lys233 provides a ligand contact to ATP. The S4 RNA-binding domain occupies 352–419 (VPLVELLVSA…KKKYYLIRYA (68 aa)).

Belongs to the class-I aminoacyl-tRNA synthetase family. TyrS type 1 subfamily. In terms of assembly, homodimer.

It is found in the cytoplasm. The enzyme catalyses tRNA(Tyr) + L-tyrosine + ATP = L-tyrosyl-tRNA(Tyr) + AMP + diphosphate + H(+). Its function is as follows. Catalyzes the attachment of tyrosine to tRNA(Tyr) in a two-step reaction: tyrosine is first activated by ATP to form Tyr-AMP and then transferred to the acceptor end of tRNA(Tyr). The polypeptide is Tyrosine--tRNA ligase (Bacillus caldotenax).